Here is a 207-residue protein sequence, read N- to C-terminus: Small ribosomal subunit protein uS4 (207 aa).

The tract at residues 31 to 54 (KCKLDTKPGQHGRTSGSRTSDYGN) is disordered. Positions 42-53 (GRTSGSRTSDYG) are enriched in polar residues. The 62-residue stretch at 97–158 (SRLDNVVYRM…KAKKQARITE (62 aa)) folds into the S4 RNA-binding domain.

It belongs to the universal ribosomal protein uS4 family. Part of the 30S ribosomal subunit. Contacts protein S5. The interaction surface between S4 and S5 is involved in control of translational fidelity.

In terms of biological role, one of the primary rRNA binding proteins, it binds directly to 16S rRNA where it nucleates assembly of the body of the 30S subunit. With S5 and S12 plays an important role in translational accuracy. The chain is Small ribosomal subunit protein uS4 from Polynucleobacter asymbioticus (strain DSM 18221 / CIP 109841 / QLW-P1DMWA-1) (Polynucleobacter necessarius subsp. asymbioticus).